An 89-amino-acid polypeptide reads, in one-letter code: UPF0335 protein CCNA_03428 (89 aa).

This sequence belongs to the UPF0335 family.

The protein is UPF0335 protein CCNA_03428 of Caulobacter vibrioides (strain NA1000 / CB15N) (Caulobacter crescentus).